The primary structure comprises 139 residues: Single-stranded DNA-binding protein 2 (139 aa).

Residues 1 to 104 (MLNRTVLVGR…VVADSVQFLE (104 aa)) enclose the SSB domain. The interval 103–139 (LEPKNNNKQNNQQHNGQTQTGNNPFDNTEEDFSDLPF) is disordered. Over residues 106 to 125 (KNNNKQNNQQHNGQTQTGNN) the composition is skewed to low complexity. Residues 129 to 139 (NTEEDFSDLPF) show a composition bias toward acidic residues.

In terms of assembly, homotetramer.

The protein is Single-stranded DNA-binding protein 2 (ssb-p) of Staphylococcus aureus (strain COL).